Reading from the N-terminus, the 191-residue chain is Protein GrpE (191 aa).

This sequence belongs to the GrpE family. Homodimer.

Its subcellular location is the cytoplasm. Participates actively in the response to hyperosmotic and heat shock by preventing the aggregation of stress-denatured proteins, in association with DnaK and GrpE. It is the nucleotide exchange factor for DnaK and may function as a thermosensor. Unfolded proteins bind initially to DnaJ; upon interaction with the DnaJ-bound protein, DnaK hydrolyzes its bound ATP, resulting in the formation of a stable complex. GrpE releases ADP from DnaK; ATP binding to DnaK triggers the release of the substrate protein, thus completing the reaction cycle. Several rounds of ATP-dependent interactions between DnaJ, DnaK and GrpE are required for fully efficient folding. This is Protein GrpE from Listeria monocytogenes serotype 4a (strain HCC23).